The following is a 120-amino-acid chain: Large ribosomal subunit protein bL17 (120 aa).

The protein belongs to the bacterial ribosomal protein bL17 family. In terms of assembly, part of the 50S ribosomal subunit. Contacts protein L32.

This chain is Large ribosomal subunit protein bL17, found in Bacillus velezensis (strain DSM 23117 / BGSC 10A6 / LMG 26770 / FZB42) (Bacillus amyloliquefaciens subsp. plantarum).